We begin with the raw amino-acid sequence, 532 residues long: CTP synthase (532 aa).

Residues 1-267 form an amidoligase domain region; the sequence is MTKYIFVTGG…DDIVLEHLQL (267 aa). A CTP-binding site is contributed by S13. S13 provides a ligand contact to UTP. 14–19 is a binding site for ATP; sequence SIGKGI. Residue Y54 coordinates L-glutamine. An ATP-binding site is contributed by D71. D71 and E141 together coordinate Mg(2+). Residues 148 to 150, 188 to 193, and K224 contribute to the CTP site; these read DIE and KTKPTQ. UTP is bound by residues 188-193 and K224; that span reads KTKPTQ. One can recognise a Glutamine amidotransferase type-1 domain in the interval 292–532; it reads RIGLVGKYVS…DFVGAALKNK (241 aa). G354 lines the L-glutamine pocket. The Nucleophile; for glutamine hydrolysis role is filled by C381. Residues 382–385, E405, and R462 each bind L-glutamine; that span reads LGMQ. Residues H507 and E509 contribute to the active site.

Belongs to the CTP synthase family. Homotetramer.

The enzyme catalyses UTP + L-glutamine + ATP + H2O = CTP + L-glutamate + ADP + phosphate + 2 H(+). The catalysed reaction is L-glutamine + H2O = L-glutamate + NH4(+). It carries out the reaction UTP + NH4(+) + ATP = CTP + ADP + phosphate + 2 H(+). Its pathway is pyrimidine metabolism; CTP biosynthesis via de novo pathway; CTP from UDP: step 2/2. With respect to regulation, allosterically activated by GTP, when glutamine is the substrate; GTP has no effect on the reaction when ammonia is the substrate. The allosteric effector GTP functions by stabilizing the protein conformation that binds the tetrahedral intermediate(s) formed during glutamine hydrolysis. Inhibited by the product CTP, via allosteric rather than competitive inhibition. Functionally, catalyzes the ATP-dependent amination of UTP to CTP with either L-glutamine or ammonia as the source of nitrogen. Regulates intracellular CTP levels through interactions with the four ribonucleotide triphosphates. In Listeria monocytogenes serovar 1/2a (strain ATCC BAA-679 / EGD-e), this protein is CTP synthase.